A 926-amino-acid chain; its full sequence is Protein transport protein SEC24-2 (926 aa).

Residues 1–54 (MSHHKKRVYPQAQAQYGQSATPLQQPAQLVPPQDPAAAGMSYAQMGMPPQGAAA) form a disordered region. The segment covering 20–54 (ATPLQQPAQLVPPQDPAAAGMSYAQMGMPPQGAAA) has biased composition (low complexity). Zn(2+) contacts are provided by Cys-231, Cys-234, Cys-253, and Cys-256. The segment at 231–256 (CRRCRSYMNPFITFIEQGRRWRCNFC) is zinc finger-like.

It belongs to the SEC23/SEC24 family. SEC24 subfamily. In terms of assembly, the COPII coat is composed of at least 5 proteins: the SEC23/24 complex, the SEC13/31 complex, and the protein SAR1. Golgi apparatus membrane; Peripheral membrane protein; Cytoplasmic side.

The protein localises to the cytoplasm. Its subcellular location is the cytoplasmic vesicle. It localises to the COPII-coated vesicle membrane. The protein resides in the endoplasmic reticulum membrane. It is found in the golgi apparatus membrane. Its function is as follows. Component of the coat protein complex II (COPII) which promotes the formation of transport vesicles from the endoplasmic reticulum (ER). The coat has two main functions, the physical deformation of the endoplasmic reticulum membrane into vesicles and the selection of cargo molecules. In Saccharomyces uvarum (strain ATCC 76518 / CBS 7001 / CLIB 283 / NBRC 10550 / MCYC 623 / NCYC 2669 / NRRL Y-11845) (Yeast), this protein is Protein transport protein SEC24-2 (SEC242).